A 428-amino-acid polypeptide reads, in one-letter code: Ammonium transporter AmtB (428 aa).

A signal peptide spans 1–22 (MKIATIKTGLASLAMLPGLVMA). Over 23–32 (APAVADKADN) the chain is Periplasmic. A helical transmembrane segment spans residues 33 to 54 (AFMMICTALVLFMTIPGIALFY). The Cytoplasmic segment spans residues 55–65 (GGLIRGKNVLS). The helical transmembrane segment at 66–90 (MLTQVTVTFALVCILWVVYGYSLAF) threads the bilayer. Residues 91-119 (GEGNNFFGNINWLMLKNIELTAVMGSIYQ) are Periplasmic-facing. A helical transmembrane segment spans residues 120–142 (YIHVAFQGSFACITVGLIVGALA). At 143-146 (ERIR) the chain is on the cytoplasmic side. Residues 147–171 (FSAVLIFVVVWLTLSYIPIAHMVWG) traverse the membrane as a helical segment. Residues 172–185 (GGLLASHGALDFAG) lie on the Periplasmic side of the membrane. The chain crosses the membrane as a helical span at residues 186–201 (GTVVHINAAIAGLVGA). The Cytoplasmic portion of the chain corresponds to 202-221 (YLIGKRVGFGKEAFKPHNLP). A helical membrane pass occupies residues 222-241 (MVFTGTAILYIGWFGFNAGS). Ser241 is a binding site for NH4(+). The Periplasmic segment spans residues 242–248 (AGTANEI). The chain crosses the membrane as a helical span at residues 249–273 (AALAFVNTVVATAAAILGWIFGEWA). Residues 274-279 (LRGKPS) lie on the Cytoplasmic side of the membrane. The chain crosses the membrane as a helical span at residues 280 to 300 (LLGACSGAIAGLVGVTPACGY). The Periplasmic segment spans residues 301–302 (IG). A helical membrane pass occupies residues 303–321 (VGGALIIGVVAGLAGLWGV). Over 322–333 (TMLKRLLRVDDP) the chain is Cytoplasmic. Residues 334–355 (CDVFGVHGVCGIVGCIMTGIFA) form a helical membrane-spanning segment. Over 356–370 (ASSLGGVGFAEGVTM) the chain is Periplasmic. A helical membrane pass occupies residues 371–399 (GHQLLVQLESIAITIVWSGVVAFIGYKLA). The Cytoplasmic segment spans residues 400–428 (DLTVGLRVPEEQEREGLDVNSHGENAYNA).

Belongs to the ammonia transporter channel (TC 1.A.11.2) family. As to quaternary structure, homotrimer. In response to elevation of the extracellular ammonium concentration, interacts and forms a complex with GlnK.

The protein resides in the cell inner membrane. With respect to regulation, in the presence of high extracellular ammonium concentrations, transport activity is inhibited by interaction with the regulatory protein GlnK. Formation of the GlnK-AmtB complex is influenced by intracellular pools of the effector molecules ATP, ADP, Mg(2+) and 2-oxoglutarate. The GlnK-AmtB interaction is also controlled by the level of intracellular glutamine and the uridylylation status of GlnK. In terms of biological role, involved in the uptake of ammonium/ammonia (NH(4)(+)/NH(3)). Transport is electrogenic. Following sequestration of NH(4)(+) at the periplasmic face, NH(4)(+) is deprotonated and neutral NH(3) is transported into the cytoplasm. Neutral NH(3) and charged H(+) are carried separately across the membrane on a unique two-lane pathway, before recombining to NH(4)(+) inside the cell. This Escherichia coli O157:H7 protein is Ammonium transporter AmtB (amtB).